The primary structure comprises 153 residues: Ribonuclease H (153 aa).

Residues 4 to 146 enclose the RNase H type-1 domain; sequence NNEIVEIYTD…CDRLATEQIK (143 aa). The Mg(2+) site is built by D13, E51, D73, and D138.

It belongs to the RNase H family. Monomer. It depends on Mg(2+) as a cofactor.

It is found in the cytoplasm. It catalyses the reaction Endonucleolytic cleavage to 5'-phosphomonoester.. Its function is as follows. Endonuclease that specifically degrades the RNA of RNA-DNA hybrids. The sequence is that of Ribonuclease H from Caldanaerobacter subterraneus subsp. tengcongensis (strain DSM 15242 / JCM 11007 / NBRC 100824 / MB4) (Thermoanaerobacter tengcongensis).